The primary structure comprises 304 residues: MINQKEGFKSGFVSIIGRPNVGKSTLLNHVIGQKIAIMSDKPQTTRNKIQGVYTSEDSQIVFIDTPGIHKPKHKLGDFMMKVAQNTLKEVDLILYVVDGAEAFGPGEEFIIERLKEAKTPVILVINKIDKVHPDDLLSLIETYRHKHEFEEVVPVSALQGNNVPTLLLEITKHLSEGPQYYPSDQVTDHPERFVIAELIREKVLHLTREEIPHSIAVVIEQIKRRQHQDTVYIGATIVVERSSQKGIIIGKQGKMLKEVGQQARADIEALLGSKVFLELWVKVQKDWRNKPQHLRDYGFREDEY.

Positions Lys-9 to Glu-176 constitute an Era-type G domain. Positions Gly-17–Ser-24 are G1. Gly-17–Ser-24 contacts GTP. The interval Gln-43–Asn-47 is G2. The segment at Asp-64 to Gly-67 is G3. Residues Asp-64–Ile-68 and Asn-126–Asp-129 contribute to the GTP site. The interval Asn-126–Asp-129 is G4. Residues Val-155 to Ala-157 are G5. Positions Ile-199–Lys-285 constitute a KH type-2 domain.

Belongs to the TRAFAC class TrmE-Era-EngA-EngB-Septin-like GTPase superfamily. Era GTPase family. As to quaternary structure, monomer.

The protein localises to the cytoplasm. It localises to the cell membrane. Functionally, an essential GTPase that binds both GDP and GTP, with rapid nucleotide exchange. Plays a role in 16S rRNA processing and 30S ribosomal subunit biogenesis and possibly also in cell cycle regulation and energy metabolism. This is GTPase Era from Halalkalibacterium halodurans (strain ATCC BAA-125 / DSM 18197 / FERM 7344 / JCM 9153 / C-125) (Bacillus halodurans).